Reading from the N-terminus, the 1481-residue chain is Cystic fibrosis transmembrane conductance regulator (1481 aa).

Topologically, residues 1–77 (MQRSPLEKAS…KLINALRRCF (77 aa)) are cytoplasmic. A helical transmembrane segment spans residues 78–98 (FWRFMFYGILLYLGEVTKAVQ). Residues 81–365 (FMFYGILLYL…WAVQTWYDSL (285 aa)) form the ABC transmembrane type-1 1 domain. At 99–122 (PLLLGRIIASYDPDNKEERSIAIY) the chain is on the extracellular side. The chain crosses the membrane as a helical span at residues 123-146 (LGIGLCLLFIVRTLLLHPAIFGLH). Over 147-195 (HIGMQMRIAMFSLIYKKTLKLSSRVLDKISIGQLVSLLSNNLNKFDEGL) the chain is Cytoplasmic. Residues 196–216 (ALAHFVWIVPLQVALLMGLIW) form a helical membrane-spanning segment. Topologically, residues 217-222 (ELLQAS) are extracellular. The chain crosses the membrane as a helical span at residues 223-243 (AFCGLGFLIVLALFQAGLGRM). Residues 244–298 (MMKYRDQRAGKINERLVITSEMIENIQSVKAYCWEEAMEKMIENLRQTELKLTRK) are Cytoplasmic-facing. The chain crosses the membrane as a helical span at residues 299 to 319 (AAYVRYFNSSAFFFSGFFVVF). Residues 320–339 (LSVLPYALIKGIVLRKIFTT) lie on the Extracellular side of the membrane. A helical membrane pass occupies residues 340–358 (ISFCIVLRMAVTRQFPWAV). The Cytoplasmic portion of the chain corresponds to 359 to 858 (QTWYDSLGAI…YLRYITVHKS (500 aa)). ATP contacts are provided by residues tryptophan 401, serine 434, 458–465 (GSTGAGKT), and glutamine 493. Residues 423-646 (NDDDSLFFSN…RPDFSSKLMG (224 aa)) enclose the ABC transporter 1 domain. The S-palmitoyl cysteine moiety is linked to residue cysteine 524. Phosphoserine occurs at positions 549 and 660. A disordered R region region spans residues 654–831 (SAERRNSILT…EEINEEDLKE (178 aa)). The residue at position 670 (serine 670) is a Phosphoserine; by PKA. The residue at position 686 (serine 686) is a Phosphoserine. Lysine 688 is covalently cross-linked (Glycyl lysine isopeptide (Lys-Gly) (interchain with G-Cter in ubiquitin)). Phosphoserine occurs at positions 700 and 712. Residue threonine 717 is modified to Phosphothreonine. Phosphoserine occurs at positions 737, 753, 768, 790, 795, and 813. The chain crosses the membrane as a helical span at residues 859 to 879 (LIFVLIWCLVIFLAEVAASLV). One can recognise an ABC transmembrane type-1 2 domain in the interval 859–1155 (LIFVLIWCLV…AVNSSIDVDS (297 aa)). At 880-918 (VLWFLGNTPPQDKGNSTYSRNNSYAVIITRTSSYYVFYI) the chain is on the extracellular side. 2 N-linked (GlcNAc...) asparagine glycosylation sites follow: asparagine 894 and asparagine 900. Residues 919-939 (YVGVADTLLAMGFFRGLPLVH) form a discontinuously helical membrane-spanning segment. Over 940 to 990 (TLITVSKILHHKMLHSVLQAPMSTLNTLKAGGILNRFSKDIAILDDLLPLT) the chain is Cytoplasmic. A helical transmembrane segment spans residues 991–1011 (IFDFIQLLLIVIGAIAVVAVL). Topologically, residues 1012–1013 (QP) are extracellular. Residues 1014-1034 (YIFVATVPVIVAFIMLRAYFL) form a helical membrane-spanning segment. Residues 1035–1095 (QTSQQLKQLE…TANWFLYLST (61 aa)) are Cytoplasmic-facing. A helical transmembrane segment spans residues 1096 to 1116 (LRWFQMRIEMIFVIFFIAVTF). Over 1117 to 1130 (ISILTTGEGEGTVG) the chain is Extracellular. The chain crosses the membrane as a helical span at residues 1131-1151 (IILTLAMNIMSTLQWAVNSSI). Over 1152 to 1481 (DVDSLMRSVS…TEEEVQDTRL (330 aa)) the chain is Cytoplasmic. An ABC transporter 2 domain is found at 1211-1444 (MTVKDLTAKY…RSLFQQAISP (234 aa)). ATP contacts are provided by residues tyrosine 1220 and 1245-1252 (GRTGSGKS). Residues 1387-1481 (RTLKQAFADC…TEEEVQDTRL (95 aa)) form an interaction with GORASP2 region. Cysteine 1396 is lipidated: S-palmitoyl cysteine. Serine 1445 and serine 1457 each carry phosphoserine. The PDZ-binding signature appears at 1479–1481 (TRL).

It belongs to the ABC transporter superfamily. ABCC family. CFTR transporter (TC 3.A.1.202) subfamily. As to quaternary structure, monomer; does not require oligomerization for channel activity. May form oligomers in the membrane. Interacts with SLC26A3, SLC26A6 and NHERF1. Interacts with SHANK2. Interacts with MYO6. Interacts (via C-terminus) with GOPC (via PDZ domain); this promotes CFTR internalization and thereby decreases channel activity. Interacts with SLC4A7 through NHERF1. Found in a complex with MYO5B and RAB11A. Interacts with ANO1. Interacts with SLC26A8. Interacts with AHCYL1; the interaction increases CFTR activity. Interacts with CSE1L. The core-glycosylated form interacts with GORASP2 (via PDZ GRASP-type 1 domain) in respone to ER stress. Interacts with MARCHF2; the interaction leads to CFTR ubiqtuitination and degradation. Interacts with ADGRG2. Post-translationally, N-glycosylated. Phosphorylated; cAMP treatment promotes phosphorylation and activates the channel. Dephosphorylation decreases the ATPase activity (in vitro). Phosphorylation at PKA sites activates the channel. Phosphorylation at PKC sites enhances the response to phosphorylation by PKA. Phosphorylated by AMPK; this inhibits channel activity. In terms of processing, ubiquitinated, leading to its degradation in the lysosome. Deubiquitination by USP10 in early endosomes enhances its endocytic recycling to the cell membrane. Ubiquitinated by RNF185 during ER stress. Ubiquitinated by MARCHF2.

Its subcellular location is the apical cell membrane. The protein localises to the early endosome membrane. The protein resides in the cell membrane. It is found in the recycling endosome membrane. It localises to the endoplasmic reticulum membrane. Its subcellular location is the nucleus. It catalyses the reaction ATP + H2O + closed Cl(-) channel = ADP + phosphate + open Cl(-) channel.. The enzyme catalyses chloride(in) = chloride(out). It carries out the reaction hydrogencarbonate(in) = hydrogencarbonate(out). The catalysed reaction is ATP + H2O = ADP + phosphate + H(+). Functionally, epithelial ion channel that plays an important role in the regulation of epithelial ion and water transport and fluid homeostasis. Mediates the transport of chloride ions across the cell membrane. Possesses an intrinsic ATPase activity and utilizes ATP to gate its channel; the passive flow of anions through the channel is gated by cycles of ATP binding and hydrolysis by the ATP-binding domains. The ion channel is also permeable to HCO(3)(-); selectivity depends on the extracellular chloride concentration. Exerts its function also by modulating the activity of other ion channels and transporters. Contributes to the regulation of the pH and the ion content of the epithelial fluid layer. Modulates the activity of the epithelial sodium channel (ENaC) complex, in part by regulating the cell surface expression of the ENaC complex. May regulate bicarbonate secretion and salvage in epithelial cells by regulating the transporter SLC4A7. Can inhibit the chloride channel activity of ANO1. Plays a role in the chloride and bicarbonate homeostasis during sperm epididymal maturation and capacitation. The polypeptide is Cystic fibrosis transmembrane conductance regulator (Macaca nemestrina (Pig-tailed macaque)).